The chain runs to 1027 residues: Sodium/potassium-transporting ATPase subunit alpha-1 (1027 aa).

Residues 1–5 constitute a propeptide that is removed on maturation; the sequence is MGVGD. Residues 1–10 show a composition bias toward basic and acidic residues; the sequence is MGVGDGRDQY. Positions 1–39 are disordered; that stretch reads MGVGDGRDQYELAAMSEQSGKKKSKNKKEKKEKDMDELK. The Cytoplasmic segment spans residues 6-90; that stretch reads GRDQYELAAM…NALTPPPTTP (85 aa). S16 is modified (phosphoserine; by PKC). Positions 29 to 39 are enriched in basic and acidic residues; it reads EKKEKDMDELK. Positions 85 to 87 are interaction with phosphoinositide-3 kinase; the sequence is PPP. The helical transmembrane segment at 91-111 threads the bilayer; it reads EWVKFCKQMFGGFSMLLWTGA. At 112-134 the chain is on the extracellular side; sequence VLCFLAYGILAAMEDEPANDNLY. A helical membrane pass occupies residues 135-155; sequence LGVVLSAVVIITGCFSYYQDA. The Cytoplasmic portion of the chain corresponds to 156-291; sequence KSSKIMDSFK…VGRTPISIEI (136 aa). The interval 217–238 is disordered; the sequence is DNSSLTGESEPQTRSPDFSNDN. The chain crosses the membrane as a helical span at residues 292–311; it reads EHFIHIITGVAVFLGVSFLL. The Extracellular segment spans residues 312–323; it reads LSLVLGYSWLEA. The chain crosses the membrane as a helical span at residues 324 to 341; that stretch reads VIFLIGIIVANVPEGLLA. Over 342-776 the chain is Cytoplasmic; sequence TVTVCLTLTA…EEGRLIFDNL (435 aa). D379 acts as the 4-aspartylphosphate intermediate in catalysis. K490 is an ATP binding site. Mg(2+) is bound by residues D721 and D725. The helical transmembrane segment at 777 to 796 threads the bilayer; it reads KKSIAYTLTSNIPEITPFLF. At 797 to 806 the chain is on the extracellular side; that stretch reads FIIANIPLPL. Residues 807-827 traverse the membrane as a helical segment; it reads GTVTILCIDLGTDMLPAISLA. Residues 828–847 are Cytoplasmic-facing; that stretch reads YEAAESDIMKRQPRNPKTDK. A helical transmembrane segment spans residues 848–870; it reads LVNERLISIAYGQIGMIQALAGF. At 871-922 the chain is on the extracellular side; the sequence is FTYFVILAENGFLPPRLLGIRMNWDDKYINDLEDSYGQQWTYEQRKIVEFTC. A helical membrane pass occupies residues 923 to 942; the sequence is HTAFFTSIVIVQWADLIICK. At 943–955 the chain is on the cytoplasmic side; that stretch reads TRRNSVFQQGMKN. The residue at position 947 (S947) is a Phosphoserine; by PKA. Residues 956 to 974 traverse the membrane as a helical segment; the sequence is KILIFGLFEETALAAFLSY. At 975–989 the chain is on the extracellular side; it reads CPGMDVALRMYPLKP. A helical transmembrane segment spans residues 990 to 1010; that stretch reads NWWFCAFPYSLLIFIYDEIRK. At 1011–1027 the chain is on the cytoplasmic side; sequence LILRRNPGGWMERETYY.

This sequence belongs to the cation transport ATPase (P-type) (TC 3.A.3) family. Type IIC subfamily. The sodium/potassium-transporting ATPase is composed of a catalytic alpha subunit, an auxiliary non-catalytic beta subunit and an additional regulatory subunit.

It localises to the cell membrane. It is found in the sarcolemma. The enzyme catalyses K(+)(out) + Na(+)(in) + ATP + H2O = K(+)(in) + Na(+)(out) + ADP + phosphate + H(+). Its function is as follows. This is the catalytic component of the active enzyme, which catalyzes the hydrolysis of ATP coupled with the exchange of sodium and potassium ions across the plasma membrane. This action creates the electrochemical gradient of sodium and potassium ions, providing the energy for active transport of various nutrients. In Catostomus commersonii (White sucker), this protein is Sodium/potassium-transporting ATPase subunit alpha-1 (atp1a1).